Reading from the N-terminus, the 224-residue chain is BTB/POZ domain-containing protein At5g48510 (224 aa).

The BTB domain occupies 24–98 (VDVMLKAKNS…ICSDGSMLSA (75 aa)).

Interacts with CUL3A.

It functions in the pathway protein modification; protein ubiquitination. Its function is as follows. May act as a substrate-specific adapter of an E3 ubiquitin-protein ligase complex (CUL3-RBX1-BTB) which mediates the ubiquitination and subsequent proteasomal degradation of target proteins. The protein is BTB/POZ domain-containing protein At5g48510 of Arabidopsis thaliana (Mouse-ear cress).